The chain runs to 200 residues: Glycerol-3-phosphate acyltransferase (200 aa).

5 consecutive transmembrane segments (helical) span residues 2 to 22, 51 to 71, 84 to 104, 113 to 133, and 143 to 163; these read IHLLLVVAAYLLGSLSFAVIV, TAAILTLLGDALKGWVAVVAA, IVLLCALAAFIGHLFPVFFGF, ALGILVALDPWLGLACLATWV, and SLSALVTAVLAPVYAGLLLGW.

This sequence belongs to the PlsY family. Probably interacts with PlsX.

Its subcellular location is the cell inner membrane. It catalyses the reaction an acyl phosphate + sn-glycerol 3-phosphate = a 1-acyl-sn-glycero-3-phosphate + phosphate. It participates in lipid metabolism; phospholipid metabolism. In terms of biological role, catalyzes the transfer of an acyl group from acyl-phosphate (acyl-PO(4)) to glycerol-3-phosphate (G3P) to form lysophosphatidic acid (LPA). This enzyme utilizes acyl-phosphate as fatty acyl donor, but not acyl-CoA or acyl-ACP. In Thiobacillus denitrificans (strain ATCC 25259 / T1), this protein is Glycerol-3-phosphate acyltransferase.